The chain runs to 1128 residues: Exportin-6 (1128 aa).

In terms of domain architecture, Importin N-terminal spans 31-97 (IEELLNSFAG…RSCLPKLLLS (67 aa)).

It belongs to the exportin family.

It is found in the nucleus. Its subcellular location is the cytoplasm. Its function is as follows. Mediates the nuclear export of actin and profilin-actin complexes in somatic cells. This is Exportin-6 (xpo6) from Danio rerio (Zebrafish).